A 32-amino-acid chain; its full sequence is Cyclotide Hyfl-B (32 aa).

Residues 1–32 constitute a cross-link (cyclopeptide (Gly-Asn)); sequence GSPIQCAETCFIGKCYTEELGCTCTAFLCMKN. Cystine bridges form between cysteine 6-cysteine 22, cysteine 10-cysteine 24, and cysteine 15-cysteine 29.

The protein belongs to the cyclotide family. Moebius subfamily. Post-translationally, this is a cyclic peptide.

Probably participates in a plant defense mechanism. This chain is Cyclotide Hyfl-B, found in Hybanthus floribundus (Greenviolet).